Reading from the N-terminus, the 412-residue chain is Alanyl-tRNA editing protein Aarsd1 (412 aa).

His109 and His113 together coordinate Zn(2+). At Ser174 the chain carries Phosphoserine. Zn(2+)-binding residues include Cys209 and His213.

Belongs to the class-II aminoacyl-tRNA synthetase family. Alax-L subfamily. It depends on Zn(2+) as a cofactor.

It is found in the cytoplasm. Its function is as follows. Functions in trans to edit the amino acid moiety from incorrectly charged tRNA(Ala). The protein is Alanyl-tRNA editing protein Aarsd1 (AARSD1) of Homo sapiens (Human).